Reading from the N-terminus, the 3289-residue chain is tRNA nuclease CdiA (3289 aa).

Positions 1-32 (MHQPPVRFTYRLLSYLISTIIAGQPLLPAVGA) are cleaved as a signal peptide. The tract at residues 36-322 (PQNGAGMDKA…AGGNLSVSSR (287 aa)) is two-partner system transport domain (TPS). The FHA-1 stretch occupies residues 351-1398 (EKLTAGRDVT…IVVRTGHLLN (1048 aa)). The segment at 595-615 (AVNASEKLTHSGKSSAPSLSL) is disordered. Residues 1399–1689 (QREGFSATTT…LTGQTGISDD (291 aa)) form a receptor binding domain (RBD) region. Residues 1690–1874 (WPLPSGNNGY…LSPEDITLHN (185 aa)) are YP domain. Residues 1875-1935 (GSVISGNNVQ…DLSAIGDISN (61 aa)) form a periplasmic FHA-1 repeat (pFR) region. The segment at 1979–2653 (TDTGPVATIK…TSKYDSKQTS (675 aa)) is FHA-2. Basic and acidic residues predominate over residues 2097-2113 (RESKNSRNGRSESHESH). Disordered stretches follow at residues 2097–2116 (RESK…HAAV), 2332–2356 (GSSK…TIGS), and 2466–2513 (TGDP…TGKN). 2 stretches are compositionally biased toward polar residues: residues 2344–2356 (GTTQ…TIGS) and 2472–2507 (TGVS…NLSV). The tract at residues 2992–3034 (SDLSEEQKQTISTLATVSAGLAGGLTGNSTASAAVGAQSGKNA) is pretoxin (PT) domain. Positions 3035–3038 (VENN) match the VENN CT cleavage motif motif. The interval 3035 to 3289 (VENNYLSVSE…VGHIQPVKVK (255 aa)) is C-terminal effector domain (CT); has tRNase activity. Residues 3039–3197 (YLSVSEKTEL…PLIGQAASNK (159 aa)) are inner membrane translocation domain (IMTD), targets protein to PtsG.

It in the N-terminal section; belongs to the CdiA toxin family. As to quaternary structure, forms a contact-dependent growth inhibition complex of CdiA-CT-NC101, CdiI-NC101 and EF-Tu; the complex is a dimer of heterotrimers. Stable CdiA-CT-NC101, EF-Tu complexes are not detected, nor are complexes with EF-Ts.

Its subcellular location is the secreted. It localises to the target cell. The protein resides in the target cell cytoplasm. Its function is as follows. Toxic component of a toxin-immunity protein module, which functions as a cellular contact-dependent growth inhibition (CDI) system. CDI modules allow bacteria to communicate with and inhibit the growth of closely related neighboring bacteria in a contact-dependent fashion (target cell counts decrease about 10,0000-fold for this system). CdiA toxicity is neutralized by its cognate immunity protein CdiI-NC101, but not by CdiI from other bacteria. The C-terminal domain (CT) cleaves tRNA endonucleolytically at the 5' side of guanine discriminator nucleotide sites (removes the last 4 nucleotides of the tRNA acceptor arm when the first nucleotide to be removed is G). Requires EF-Ts (tsf) for toxic function of the CT domain in vivo. In vitro the CT tRNase activity requires both EF-Tu (tufA) and EF-Ts. EF-Ts probably increases steady-state GTP-EF-Tu-aa-tRNA substrate levels. The CT domain is thought to remodel this same complex to displace the 3'-end of the aa-tRNA and allow it to enter into the toxin active site. The CT domain gains access to the cytoplasm of target cells by using integral inner membrane protein PTS system glucose-specific EIICB component (ptsG). Functionally, the CdiA protein is thought to be exported from the cell through the central lumen of CdiB, the other half of its two-partner system (TPS). The TPS domain probably remains associated with CdiB while the FHA-1 domain forms an extended filament with the receptor-binding domain (RBD) at its extremity; in the secretion arrested state the C-terminus of the RBD and YP domains form a hairpin-like structure as the FHA-2, PT and CT domains are periplasmic. The YP domain is probably responsible for this arrest at the point where it re-enters the host cell periplasm. Upon binding to a target cell outer membrane receptor a signal is transmitted to activate secretion. The filament elongates slightly, the rest of CdiA is secreted and the FHA-2 domain becomes stably associated with the target cell's outer membrane where it facilitates entry of the toxic CT domain into the target cell periplasm. From there the toxic CT domain is cleaved and gains access to the target cell cytoplasm via an inner membrane protein (PtsG for this CDI). The chain is tRNA nuclease CdiA from Escherichia coli (strain NC101).